An 82-amino-acid chain; its full sequence is Large ribosomal subunit protein uL23 (82 aa).

It belongs to the universal ribosomal protein uL23 family. Part of the 50S ribosomal subunit. Contacts protein L29.

Its function is as follows. Binds to 23S rRNA. One of the proteins that surrounds the polypeptide exit tunnel on the outside of the ribosome. The chain is Large ribosomal subunit protein uL23 from Natronomonas pharaonis (strain ATCC 35678 / DSM 2160 / CIP 103997 / JCM 8858 / NBRC 14720 / NCIMB 2260 / Gabara) (Halobacterium pharaonis).